Consider the following 323-residue polypeptide: Galactosylgalactosylxylosylprotein 3-beta-glucuronosyltransferase 2 (323 aa).

Residues 1–2 lie on the Cytoplasmic side of the membrane; that stretch reads MK. Residues 3–23 form a helical; Signal-anchor for type II membrane protein membrane-spanning segment; that stretch reads SALFTRFFILLPWILIVIIML. The Lumenal portion of the chain corresponds to 24–323; sequence DVDTRRPVPP…YHLDTVKIEV (300 aa). Residues 51–80 form a disordered region; it reads RLPLRRGGPAHGTQKRNQSRPQPQPEPQLP. N67 is a glycosylation site (N-linked (GlcNAc...) asparagine). UDP-alpha-D-glucuronate contacts are provided by residues 87–89, D118, R155, R160, and 185–187; these read PTY and DDD. D187 provides a ligand contact to Mn(2+). The interaction with galactose moiety of substrate glycoprotein stretch occupies residues 234 to 243; sequence WRADRPFAID. The active-site Proton donor/acceptor is E273. N292 carries N-linked (GlcNAc...) asparagine glycosylation. 300 to 302 contacts UDP-alpha-D-glucuronate; it reads HTR.

The protein belongs to the glycosyltransferase 43 family. As to quaternary structure, homodimer. The cofactor is Mn(2+). Expressed in the trachea, retina, spinal cord, hippocampus and other brain regions, and, at lower levels, in testis and ovary.

The protein localises to the golgi apparatus membrane. The catalysed reaction is 3-O-(beta-D-galactosyl-(1-&gt;3)-beta-D-galactosyl-(1-&gt;4)-beta-D-xylosyl)-L-seryl-[protein] + UDP-alpha-D-glucuronate = 3-O-(beta-D-GlcA-(1-&gt;3)-beta-D-Gal-(1-&gt;3)-beta-D-Gal-(1-&gt;4)-beta-D-Xyl)-L-seryl-[protein] + UDP + H(+). It participates in protein modification; protein glycosylation. Its function is as follows. Involved in the biosynthesis of L2/HNK-1 carbohydrate epitope on both glycolipids and glycoproteins. This chain is Galactosylgalactosylxylosylprotein 3-beta-glucuronosyltransferase 2 (B3GAT2), found in Homo sapiens (Human).